A 143-amino-acid chain; its full sequence is Transcriptional regulator MraZ (143 aa).

SpoVT-AbrB domains follow at residues 5–47 (TYAP…SQRE) and 76–119 (ASAE…DAEA).

The protein belongs to the MraZ family. Forms oligomers.

It is found in the cytoplasm. The protein resides in the nucleoid. This chain is Transcriptional regulator MraZ, found in Leifsonia xyli subsp. xyli (strain CTCB07).